The primary structure comprises 194 residues: Mitochondrial inner membrane protease ATP23 (194 aa).

The segment at 1–20 (MEDAAAPNSGSEFNPGARRG) is disordered. A Zn(2+)-binding site is contributed by His-96. The active site involves Glu-97. Position 100 (His-100) interacts with Zn(2+).

It belongs to the peptidase M76 family.

Its subcellular location is the mitochondrion inner membrane. Has a dual role in the assembly of mitochondrial ATPase. Acts as a protease that removes the N-terminal 10 residues of mitochondrial ATPase CF(0) subunit 6 (ATP6) at the intermembrane space side. Also involved in the correct assembly of the membrane-embedded ATPase CF(0) particle, probably mediating association of ATP6 with the subunit 9 ring. The protein is Mitochondrial inner membrane protease ATP23 of Arabidopsis thaliana (Mouse-ear cress).